The chain runs to 384 residues: S-adenosylmethionine synthase (384 aa).

ATP is bound at residue H15. D17 is a binding site for Mg(2+). E43 lines the K(+) pocket. L-methionine-binding residues include E56 and Q99. Positions 99–109 (QSPDINQGVDK) are flexible loop. ATP is bound by residues 164-166 (DAK), 230-231 (RF), D239, 245-246 (RK), A262, and K266. Residue D239 participates in L-methionine binding. K270 serves as a coordination point for L-methionine.

The protein belongs to the AdoMet synthase family. As to quaternary structure, homotetramer; dimer of dimers. Mg(2+) serves as cofactor. K(+) is required as a cofactor.

It localises to the cytoplasm. The catalysed reaction is L-methionine + ATP + H2O = S-adenosyl-L-methionine + phosphate + diphosphate. The protein operates within amino-acid biosynthesis; S-adenosyl-L-methionine biosynthesis; S-adenosyl-L-methionine from L-methionine: step 1/1. Catalyzes the formation of S-adenosylmethionine (AdoMet) from methionine and ATP. The overall synthetic reaction is composed of two sequential steps, AdoMet formation and the subsequent tripolyphosphate hydrolysis which occurs prior to release of AdoMet from the enzyme. In Aliivibrio salmonicida (strain LFI1238) (Vibrio salmonicida (strain LFI1238)), this protein is S-adenosylmethionine synthase.